We begin with the raw amino-acid sequence, 259 residues long: Glutamate racemase (259 aa).

Substrate-binding positions include 7–8 and 39–40; these read DS and YG. The Proton donor/acceptor role is filled by cysteine 70. 71 to 72 serves as a coordination point for substrate; that stretch reads NS. Cysteine 180 functions as the Proton donor/acceptor in the catalytic mechanism. Substrate is bound at residue 181-182; the sequence is TH.

Belongs to the aspartate/glutamate racemases family.

It carries out the reaction L-glutamate = D-glutamate. It functions in the pathway cell wall biogenesis; peptidoglycan biosynthesis. In terms of biological role, provides the (R)-glutamate required for cell wall biosynthesis. This chain is Glutamate racemase, found in Hydrogenobaculum sp. (strain Y04AAS1).